The following is a 269-amino-acid chain: Zinc transporter ZupT (269 aa).

Transmembrane regions (helical) follow at residues Val-5–Ile-25, Ser-38–Val-58, Trp-75–Ile-95, Met-125–Phe-145, Ile-158–Phe-178, Leu-190–Met-210, Phe-212–Ile-232, and Leu-249–Val-269. Fe(2+) is bound by residues Asn-137 and Glu-140. 2 residues coordinate Zn(2+): Glu-140 and His-165. Residues Asn-166, Glu-169, and Glu-198 each contribute to the Fe(2+) site. Glu-169 contacts Zn(2+).

Belongs to the ZIP transporter (TC 2.A.5) family. ZupT subfamily.

It is found in the cell membrane. The enzyme catalyses Zn(2+)(in) = Zn(2+)(out). Functionally, mediates zinc uptake. May also transport other divalent cations. This is Zinc transporter ZupT from Lysinibacillus sphaericus (strain C3-41).